The primary structure comprises 199 residues: Probable chemoreceptor glutamine deamidase CheD (199 aa).

Belongs to the CheD family.

The enzyme catalyses L-glutaminyl-[protein] + H2O = L-glutamyl-[protein] + NH4(+). Functionally, probably deamidates glutamine residues to glutamate on methyl-accepting chemotaxis receptors (MCPs), playing an important role in chemotaxis. The polypeptide is Probable chemoreceptor glutamine deamidase CheD (Nitratidesulfovibrio vulgaris (strain ATCC 29579 / DSM 644 / CCUG 34227 / NCIMB 8303 / VKM B-1760 / Hildenborough) (Desulfovibrio vulgaris)).